We begin with the raw amino-acid sequence, 997 residues long: Protein translocase subunit SecA (997 aa).

ATP-binding positions include Q102, 120–124, and D521; that span reads GEGKT. The disordered stretch occupies residues 893–997; sequence PADASPNGVV…KYKKCHGAEA (105 aa). Residues 938-953 show a composition bias toward basic and acidic residues; sequence AIEREFEKKKQQELSH. Zn(2+)-binding residues include C981, C983, C992, and H993. Basic residues predominate over residues 987-997; sequence KKYKKCHGAEA.

The protein belongs to the SecA family. Monomer and homodimer. Part of the essential Sec protein translocation apparatus which comprises SecA, SecYEG and auxiliary proteins SecDF. Other proteins may also be involved. Requires Zn(2+) as cofactor.

The protein resides in the cell inner membrane. The protein localises to the cytoplasm. The catalysed reaction is ATP + H2O + cellular proteinSide 1 = ADP + phosphate + cellular proteinSide 2.. Functionally, part of the Sec protein translocase complex. Interacts with the SecYEG preprotein conducting channel. Has a central role in coupling the hydrolysis of ATP to the transfer of proteins into and across the cell membrane, serving as an ATP-driven molecular motor driving the stepwise translocation of polypeptide chains across the membrane. The polypeptide is Protein translocase subunit SecA (Acidobacterium capsulatum (strain ATCC 51196 / DSM 11244 / BCRC 80197 / JCM 7670 / NBRC 15755 / NCIMB 13165 / 161)).